A 604-amino-acid polypeptide reads, in one-letter code: Prostaglandin G/H synthase 2 (604 aa).

The N-terminal stretch at 1-17 (MLARALLLCAALALGQA) is a signal peptide. In terms of domain architecture, EGF-like spans 18 to 55 (ANPCCSNPCQNRGECLSVGFDRYKCDCTRTGYYGENCT). Intrachain disulfides connect C21/C32, C22/C145, C26/C42, and C44/C54. A glycan (N-linked (GlcNAc...) asparagine) is linked at N53. R106 provides a ligand contact to substrate. N130 carries an N-linked (GlcNAc...) asparagine glycan. H193 serves as the catalytic Proton acceptor. Y341 contributes to the substrate binding site. Y371 (for cyclooxygenase activity) is an active-site residue. Residue H374 coordinates heme b. A glycan (N-linked (GlcNAc...) asparagine) is linked at N396. Residue C526 is modified to S-nitrosocysteine. C555 and C561 are joined by a disulfide. N-linked (GlcNAc...) asparagine glycosylation is present at N580.

Belongs to the prostaglandin G/H synthase family. In terms of assembly, homodimer. It depends on heme b as a cofactor. S-nitrosylation by NOS2 (iNOS) activates enzyme activity. S-nitrosylation may take place on different Cys residues in addition to Cys-526.

It localises to the microsome membrane. The protein localises to the endoplasmic reticulum membrane. Its subcellular location is the nucleus inner membrane. It is found in the nucleus outer membrane. It carries out the reaction (5Z,8Z,11Z,14Z)-eicosatetraenoate + AH2 + 2 O2 = prostaglandin H2 + A + H2O. The catalysed reaction is (5Z,8Z,11Z,14Z)-eicosatetraenoate + 2 O2 = prostaglandin G2. The enzyme catalyses prostaglandin G2 + AH2 = prostaglandin H2 + A + H2O. It catalyses the reaction (5Z,8Z,11Z,14Z,17Z)-eicosapentaenoate + 2 O2 = prostaglandin G3. It carries out the reaction prostaglandin G3 + AH2 = prostaglandin H3 + A + H2O. The catalysed reaction is (8Z,11Z,14Z)-eicosatrienoate + 2 O2 = prostaglandin G1. The enzyme catalyses prostaglandin G1 + AH2 = prostaglandin H1 + A + H2O. It catalyses the reaction 2-(5Z,8Z,11Z,14Z)-eicosatetraenoyl-sn-glycero-3-phosphoethanolamine + 2 O2 = 2-(prostaglandin G2)-sn-glycero-3-phosphoethanolamine. It carries out the reaction 2-(prostaglandin G2)-sn-glycero-3-phosphoethanolamine + AH2 = 2-(prostaglandin H2)-sn-glycero-3-phosphoethanolamine + A + H2O. The catalysed reaction is 2-(5Z,8Z,11Z,14Z)-eicosatetraenoyl-sn-glycero-3-phosphocholine + 2 O2 = 2-(prostaglandin G2)-sn-glycero-3-phosphocholine. The enzyme catalyses 2-(prostaglandin G2)-sn-glycero-3-phosphocholine + AH2 = 2-(prostaglandin H2)-sn-glycero-3-phosphocholine + A + H2O. It catalyses the reaction (15S)-hydroperoxy-(5Z,8Z,11Z,13E)-eicosatetraenoate + AH2 = (15S)-hydroxy-(5Z,8Z,11Z,13E)-eicosatetraenoate + A + H2O. It carries out the reaction 2-(5Z,8Z,11Z,14Z)-eicosatetraenoyl-sn-glycero-3-phosphocholine + AH2 + O2 = 2-[(15S)-hydroxy-(5Z,8Z,11Z,13E)-eicosatetraenoyl]-sn-glycero-3-phosphocholine + A + H2O. The catalysed reaction is 2-(5Z,8Z,11Z,14Z)-eicosatetraenoyl-sn-glycero-3-phosphocholine + AH2 + O2 = 2-[(15R)-hydroxy-(5Z,8Z,11Z,13E)-eicosatetraenoyl]-sn-glycero-3-phosphocholine + A + H2O. The enzyme catalyses 2-(5Z,8Z,11Z,14Z)-eicosatetraenoyl-sn-glycero-3-phosphocholine + AH2 + O2 = 2-[(11R)-hydroxy-(5Z,8Z,12E,14Z)-eicosatetraenoyl]-sn-glycero-3-phosphocholine + A + H2O. It catalyses the reaction (9Z,12Z)-octadecadienoate + AH2 + O2 = 9-hydroxy-(10E,12Z)-octadecadienoate + A + H2O. It carries out the reaction (9Z,12Z)-octadecadienoate + AH2 + O2 = 13-hydroxy-(9Z,11E)-octadecadienoate + A + H2O. The catalysed reaction is (5Z,8Z,11Z,14Z)-eicosatetraenoate + AH2 + O2 = (15R)-hydroxy-(5Z,8Z,11Z,13E)-eicosatetraenoate + A + H2O. The enzyme catalyses (5Z,8Z,11Z,14Z)-eicosatetraenoate + AH2 + O2 = (11R)-hydroxy-(5Z,8Z,12E,14Z)-eicosatetraenoate + A + H2O. It catalyses the reaction (5Z,8Z,11Z,14Z,17Z)-eicosapentaenoate + AH2 + O2 = (11R)-hydroxy-(5Z,8Z,12E,14Z,17Z)-eicosapentaenoate + A + H2O. It carries out the reaction (5Z,8Z,11Z,14Z,17Z)-eicosapentaenoate + AH2 + O2 = (18S)-hydroxy-(5Z,8Z,11Z,14Z,16E)-eicosapentaenoate + A + H2O. The catalysed reaction is (5Z,8Z,11Z,14Z,17Z)-eicosapentaenoate + AH2 + O2 = (18R)-hydroxy-(5Z,8Z,11Z,14Z,16E)-eicosapentaenoate + A + H2O. The enzyme catalyses (5Z,8Z,11Z,14Z,17Z)-eicosapentaenoate + AH2 + O2 = (15R)-hydroxy-(5Z,8Z,11Z,13E,17Z)-eicosapentaenoate + A + H2O. It catalyses the reaction (5Z,8Z,11Z,14Z,17Z)-eicosapentaenoate + AH2 + O2 = (15S)-hydroxy-(5Z,8Z,11Z,13E,17Z)-eicosapentaenoate + A + H2O. It carries out the reaction (7Z,10Z,13Z,16Z,19Z)-docosapentaenoate + AH2 + O2 = 13R-hydroxy-(7Z,10Z,14E,16Z,19Z)-docosapentaenoate + A + H2O. The catalysed reaction is (4Z,7Z,10Z,13Z,16Z,19Z)-docosahexaenoate + AH2 + O2 = 13-hydroxy-(4Z,7Z,10Z,14E,16Z,19Z)-docosahexaenoate + A + H2O. The enzyme catalyses (5S)-hydroxy-(6E,8Z,11Z,14Z)-eicosatetraenoate + AH2 + O2 = (5S,15R)-dihydroxy-(6E,8Z,11Z,13E)-eicosatetraenoate + A + H2O. It catalyses the reaction (4Z,7Z,10Z,13Z,16Z,19Z)-docosahexaenoate + AH2 + O2 = 17R-hydroxy-(4Z,7Z,10Z,13Z,15E,19Z)-docosahexaenoate + A + H2O. It carries out the reaction (5S)-hydroxy-(6E,8Z,11Z,14Z)-eicosatetraenoate + AH2 + O2 = (5S,15S)-dihydroxy-(6E,8Z,11Z,13E)-eicosatetraenoate + A + H2O. The catalysed reaction is (5S)-hydroxy-(6E,8Z,11Z,14Z)-eicosatetraenoate + AH2 + O2 = (5S,11R)-dihydroxy-(6E,8Z,12E,14Z)-eicosatetraenoate + A + H2O. The enzyme catalyses 2-(5Z,8Z,11Z,14Z-eicosatetraenoyl)-glycerol + 2 O2 = 2-glyceryl-prostaglandin G2. It catalyses the reaction 2-glyceryl-prostaglandin G2 + AH2 = 2-glyceryl-prostaglandin H2 + A + H2O. It carries out the reaction (5Z,8Z,11Z,14Z)-eicosatetraenoate + O2 = (15R)-hydroperoxy-(5Z,8Z,11Z,13E)-eicosatetraenoate. The catalysed reaction is (5Z,8Z,11Z,14Z)-eicosatetraenoate + O2 = 11R-hydroperoxy-(5Z,8Z,12E,14Z)-eicosatetraenoate. The enzyme catalyses (9Z,12Z)-octadecadienoate + AH2 + O2 = (9R)-hydroxy-(10E,12Z)-octadecadienoate + A + H2O. It catalyses the reaction (9Z,12Z)-octadecadienoate + AH2 + O2 = (9S)-hydroxy-(10E,12Z)-octadecadienoate + A + H2O. It carries out the reaction (9Z,12Z)-octadecadienoate + AH2 + O2 = (13S)-hydroxy-(9Z,11E)-octadecadienoate + A + H2O. The catalysed reaction is (9Z,12Z)-octadecadienoate + AH2 + O2 = (13R)-hydroxy-(9Z,11E)-octadecadienoate + A + H2O. Its pathway is lipid metabolism; prostaglandin biosynthesis. Dual cyclooxygenase and peroxidase in the biosynthesis pathway of prostanoids, a class of C20 oxylipins mainly derived from arachidonate ((5Z,8Z,11Z,14Z)-eicosatetraenoate, AA, C20:4(n-6)), with a particular role in the inflammatory response. The cyclooxygenase activity oxygenates AA to the hydroperoxy endoperoxide prostaglandin G2 (PGG2), and the peroxidase activity reduces PGG2 to the hydroxy endoperoxide prostaglandin H2 (PGH2), the precursor of all 2-series prostaglandins and thromboxanes. This complex transformation is initiated by abstraction of hydrogen at carbon 13 (with S-stereochemistry), followed by insertion of molecular O2 to form the endoperoxide bridge between carbon 9 and 11 that defines prostaglandins. The insertion of a second molecule of O2 (bis-oxygenase activity) yields a hydroperoxy group in PGG2 that is then reduced to PGH2 by two electrons. Similarly catalyzes successive cyclooxygenation and peroxidation of dihomo-gamma-linoleate (DGLA, C20:3(n-6)) and eicosapentaenoate (EPA, C20:5(n-3)) to corresponding PGH1 and PGH3, the precursors of 1- and 3-series prostaglandins. In an alternative pathway of prostanoid biosynthesis, converts 2-arachidonoyl lysophopholipids to prostanoid lysophopholipids, which are then hydrolyzed by intracellular phospholipases to release free prostanoids. Metabolizes 2-arachidonoyl glycerol yielding the glyceryl ester of PGH2, a process that can contribute to pain response. Generates lipid mediators from n-3 and n-6 polyunsaturated fatty acids (PUFAs) via a lipoxygenase-type mechanism. Oxygenates PUFAs to hydroperoxy compounds and then reduces them to corresponding alcohols. Plays a role in the generation of resolution phase interaction products (resolvins) during both sterile and infectious inflammation. Metabolizes docosahexaenoate (DHA, C22:6(n-3)) to 17R-HDHA, a precursor of the D-series resolvins (RvDs). As a component of the biosynthetic pathway of E-series resolvins (RvEs), converts eicosapentaenoate (EPA, C20:5(n-3)) primarily to 18S-HEPE that is further metabolized by ALOX5 and LTA4H to generate 18S-RvE1 and 18S-RvE2. In vascular endothelial cells, converts docosapentaenoate (DPA, C22:5(n-3)) to 13R-HDPA, a precursor for 13-series resolvins (RvTs) shown to activate macrophage phagocytosis during bacterial infection. In activated leukocytes, contributes to oxygenation of hydroxyeicosatetraenoates (HETE) to diHETES (5,15-diHETE and 5,11-diHETE). Can also use linoleate (LA, (9Z,12Z)-octadecadienoate, C18:2(n-6)) as substrate and produce hydroxyoctadecadienoates (HODEs) in a regio- and stereospecific manner, being (9R)-HODE ((9R)-hydroxy-(10E,12Z)-octadecadienoate) and (13S)-HODE ((13S)-hydroxy-(9Z,11E)-octadecadienoate) its major products. During neuroinflammation, plays a role in neuronal secretion of specialized preresolving mediators (SPMs) 15R-lipoxin A4 that regulates phagocytic microglia. This is Prostaglandin G/H synthase 2 (PTGS2) from Cavia porcellus (Guinea pig).